The primary structure comprises 122 residues: Large ribosomal subunit protein uL14 (122 aa).

It belongs to the universal ribosomal protein uL14 family. Part of the 50S ribosomal subunit. Forms a cluster with proteins L3 and L19. In the 70S ribosome, L14 and L19 interact and together make contacts with the 16S rRNA in bridges B5 and B8.

In terms of biological role, binds to 23S rRNA. Forms part of two intersubunit bridges in the 70S ribosome. This Bacillus licheniformis (strain ATCC 14580 / DSM 13 / JCM 2505 / CCUG 7422 / NBRC 12200 / NCIMB 9375 / NCTC 10341 / NRRL NRS-1264 / Gibson 46) protein is Large ribosomal subunit protein uL14.